The primary structure comprises 534 residues: Glucans biosynthesis protein D (534 aa).

A signal peptide (tat-type signal) is located at residues 1-28 (MYRRDFLKSVTAAWVAFGLPNPLGGAFA).

The protein belongs to the OpgD/OpgG family. Predicted to be exported by the Tat system. The position of the signal peptide cleavage has not been experimentally proven.

Its subcellular location is the periplasm. It participates in glycan metabolism; osmoregulated periplasmic glucan (OPG) biosynthesis. Probably involved in the control of the structural glucose backbone of osmoregulated periplasmic glucans (OPGs). This Xylella fastidiosa (strain M23) protein is Glucans biosynthesis protein D.